Here is a 418-residue protein sequence, read N- to C-terminus: Putative ion-transport protein YfeO (418 aa).

10 consecutive transmembrane segments (helical) span residues Pro15–Leu37, Leu57–Gly79, Ala99–Gly118, Ile149–Ser171, Leu186–Phe208, Thr221–Cys243, Val258–Leu280, Tyr301–Gly323, Val343–Val363, and Val376–Leu398.

Belongs to the chloride channel (TC 2.A.49) family.

The protein resides in the cell membrane. In Shigella flexneri, this protein is Putative ion-transport protein YfeO (yfeO).